The sequence spans 246 residues: Cytochrome c oxidase subunit 2 (246 aa).

The next 2 helical transmembrane spans lie at 31 to 51 and 72 to 92; these read HMMYYLALMLGLVSYMLYVMM and IMWTMFPAVMLLLMAFPSFML. Histidine 175, cysteine 210, glutamate 212, cysteine 214, histidine 218, and methionine 221 together coordinate Cu cation. Glutamate 212 lines the Mg(2+) pocket.

This sequence belongs to the cytochrome c oxidase subunit 2 family. As to quaternary structure, component of the cytochrome c oxidase (complex IV, CIV), a multisubunit enzyme composed of a catalytic core of 3 subunits and several supernumerary subunits. The complex exists as a monomer or a dimer and forms supercomplexes (SCs) in the inner mitochondrial membrane with ubiquinol-cytochrome c oxidoreductase (cytochrome b-c1 complex, complex III, CIII). It depends on Cu cation as a cofactor.

The protein resides in the mitochondrion inner membrane. The catalysed reaction is 4 Fe(II)-[cytochrome c] + O2 + 8 H(+)(in) = 4 Fe(III)-[cytochrome c] + 2 H2O + 4 H(+)(out). Functionally, component of the cytochrome c oxidase, the last enzyme in the mitochondrial electron transport chain which drives oxidative phosphorylation. The respiratory chain contains 3 multisubunit complexes succinate dehydrogenase (complex II, CII), ubiquinol-cytochrome c oxidoreductase (cytochrome b-c1 complex, complex III, CIII) and cytochrome c oxidase (complex IV, CIV), that cooperate to transfer electrons derived from NADH and succinate to molecular oxygen, creating an electrochemical gradient over the inner membrane that drives transmembrane transport and the ATP synthase. Cytochrome c oxidase is the component of the respiratory chain that catalyzes the reduction of oxygen to water. Electrons originating from reduced cytochrome c in the intermembrane space (IMS) are transferred via the dinuclear copper A center (CU(A)) of subunit 2 and heme A of subunit 1 to the active site in subunit 1, a binuclear center (BNC) formed by heme A3 and copper B (CU(B)). The BNC reduces molecular oxygen to 2 water molecules using 4 electrons from cytochrome c in the IMS and 4 protons from the mitochondrial matrix. The chain is Cytochrome c oxidase subunit 2 (COX2) from Debaryomyces hansenii (strain ATCC 36239 / CBS 767 / BCRC 21394 / JCM 1990 / NBRC 0083 / IGC 2968) (Yeast).